The primary structure comprises 207 residues: Ribosomal RNA small subunit methyltransferase G (207 aa).

S-adenosyl-L-methionine contacts are provided by residues G74, L79, 125-126 (VE), and R140.

It belongs to the methyltransferase superfamily. RNA methyltransferase RsmG family.

It is found in the cytoplasm. The catalysed reaction is guanosine(527) in 16S rRNA + S-adenosyl-L-methionine = N(7)-methylguanosine(527) in 16S rRNA + S-adenosyl-L-homocysteine. In terms of biological role, specifically methylates the N7 position of guanine in position 527 of 16S rRNA. The protein is Ribosomal RNA small subunit methyltransferase G of Shewanella halifaxensis (strain HAW-EB4).